The sequence spans 80 residues: Cytochrome c oxidase subunit 7B, mitochondrial (80 aa).

The transit peptide at methionine 1–glutamine 24 directs the protein to the mitochondrion. The Mitochondrial matrix portion of the chain corresponds to isoleucine 25–aspartate 32. Residues phenylalanine 33–glutamine 59 traverse the membrane as a helical segment. At isoleucine 60–glutamine 80 the chain is on the mitochondrial intermembrane side.

The protein belongs to the cytochrome c oxidase VIIb family. In terms of assembly, component of the cytochrome c oxidase (complex IV, CIV), a multisubunit enzyme composed of 14 subunits. The complex is composed of a catalytic core of 3 subunits MT-CO1, MT-CO2 and MT-CO3, encoded in the mitochondrial DNA, and 11 supernumerary subunits COX4I1 (or COX4I2), COX5A, COX5B, COX6A2 (or COX6A1), COX6B1 (or COX6B2), COX6C, COX7A1 (or COX7A2), COX7B, COX7C, COX8B and NDUFA4, which are encoded in the nuclear genome. The complex exists as a monomer or a dimer and forms supercomplexes (SCs) in the inner mitochondrial membrane with NADH-ubiquinone oxidoreductase (complex I, CI) and ubiquinol-cytochrome c oxidoreductase (cytochrome b-c1 complex, complex III, CIII), resulting in different assemblies (supercomplex SCI(1)III(2)IV(1) and megacomplex MCI(2)III(2)IV(2)).

The protein localises to the mitochondrion inner membrane. It participates in energy metabolism; oxidative phosphorylation. Component of the cytochrome c oxidase, the last enzyme in the mitochondrial electron transport chain which drives oxidative phosphorylation. The respiratory chain contains 3 multisubunit complexes succinate dehydrogenase (complex II, CII), ubiquinol-cytochrome c oxidoreductase (cytochrome b-c1 complex, complex III, CIII) and cytochrome c oxidase (complex IV, CIV), that cooperate to transfer electrons derived from NADH and succinate to molecular oxygen, creating an electrochemical gradient over the inner membrane that drives transmembrane transport and the ATP synthase. Cytochrome c oxidase is the component of the respiratory chain that catalyzes the reduction of oxygen to water. Electrons originating from reduced cytochrome c in the intermembrane space (IMS) are transferred via the dinuclear copper A center (CU(A)) of subunit 2 and heme A of subunit 1 to the active site in subunit 1, a binuclear center (BNC) formed by heme A3 and copper B (CU(B)). The BNC reduces molecular oxygen to 2 water molecules using 4 electrons from cytochrome c in the IMS and 4 protons from the mitochondrial matrix. Plays a role in proper central nervous system (CNS) development in vertebrates. This is Cytochrome c oxidase subunit 7B, mitochondrial (COX7B) from Bos taurus (Bovine).